A 294-amino-acid polypeptide reads, in one-letter code: 4-hydroxy-tetrahydrodipicolinate synthase (294 aa).

Pyruvate is bound at residue Thr45. Tyr133 acts as the Proton donor/acceptor in catalysis. The Schiff-base intermediate with substrate role is filled by Lys161. A pyruvate-binding site is contributed by Ile203.

The protein belongs to the DapA family. In terms of assembly, homotetramer; dimer of dimers.

The protein localises to the cytoplasm. It catalyses the reaction L-aspartate 4-semialdehyde + pyruvate = (2S,4S)-4-hydroxy-2,3,4,5-tetrahydrodipicolinate + H2O + H(+). It functions in the pathway amino-acid biosynthesis; L-lysine biosynthesis via DAP pathway; (S)-tetrahydrodipicolinate from L-aspartate: step 3/4. Its function is as follows. Catalyzes the condensation of (S)-aspartate-beta-semialdehyde [(S)-ASA] and pyruvate to 4-hydroxy-tetrahydrodipicolinate (HTPA). The protein is 4-hydroxy-tetrahydrodipicolinate synthase of Buchnera aphidicola subsp. Baizongia pistaciae (strain Bp).